A 643-amino-acid polypeptide reads, in one-letter code: Threonine--tRNA ligase (643 aa).

In terms of domain architecture, TGS spans 1–61 (MIKVSLKDGS…NEDVSLSICT (61 aa)). Residues 240-540 (DHNKLGRELK…LIEKYAGAFP (301 aa)) are catalytic. Zn(2+) contacts are provided by Cys-335, His-386, and His-517.

This sequence belongs to the class-II aminoacyl-tRNA synthetase family. Homodimer. The cofactor is Zn(2+).

It localises to the cytoplasm. The catalysed reaction is tRNA(Thr) + L-threonine + ATP = L-threonyl-tRNA(Thr) + AMP + diphosphate + H(+). In terms of biological role, catalyzes the attachment of threonine to tRNA(Thr) in a two-step reaction: L-threonine is first activated by ATP to form Thr-AMP and then transferred to the acceptor end of tRNA(Thr). Also edits incorrectly charged L-seryl-tRNA(Thr). The protein is Threonine--tRNA ligase of Clostridium botulinum (strain Alaska E43 / Type E3).